The following is a 449-amino-acid chain: Tubulin beta chain (449 aa).

Positions 11, 71, 140, 144, 145, 146, 206, and 228 each coordinate GTP. Position 71 (glutamate 71) interacts with Mg(2+).

Belongs to the tubulin family. Dimer of alpha and beta chains. A typical microtubule is a hollow water-filled tube with an outer diameter of 25 nm and an inner diameter of 15 nM. Alpha-beta heterodimers associate head-to-tail to form protofilaments running lengthwise along the microtubule wall with the beta-tubulin subunit facing the microtubule plus end conferring a structural polarity. Microtubules usually have 13 protofilaments but different protofilament numbers can be found in some organisms and specialized cells. Requires Mg(2+) as cofactor.

The protein resides in the cytoplasm. The protein localises to the cytoskeleton. Tubulin is the major constituent of microtubules, a cylinder consisting of laterally associated linear protofilaments composed of alpha- and beta-tubulin heterodimers. Microtubules grow by the addition of GTP-tubulin dimers to the microtubule end, where a stabilizing cap forms. Below the cap, tubulin dimers are in GDP-bound state, owing to GTPase activity of alpha-tubulin. This is Tubulin beta chain (TUBB) from Cicer arietinum (Chickpea).